Here is a 667-residue protein sequence, read N- to C-terminus: Sterile alpha motif domain-containing protein 15 (667 aa).

The segment covering 1 to 18 (MAEVPEDYDSGPDEDGEP) has biased composition (acidic residues). Disordered stretches follow at residues 1 to 108 (MAEV…KSER) and 147 to 424 (SAME…IKSK). 4 stretches are compositionally biased toward basic and acidic residues: residues 19–53 (ESERPELHKSYENAERDTMAEADSKLPAEIYHEPQ), 84–93 (IAKESKRDVP), 187–196 (ESLRVQHEET), and 228–266 (TKPDIPEETQRESTEKKRTEPPEQARPEFPEKEPRKSSE). Residues 268 to 277 (AGLEPPEETQ) show a composition bias toward acidic residues. Basic and acidic residues-rich tracts occupy residues 284–314 (MQRKATEEKGTELPERTKPDLPDHKSRKSTD), 322–338 (EEIKLEFPEEESRKPNE), 346–364 (EMMKPESPEEIRKSNEEKN), and 381–422 (PRVE…EPIK). In terms of domain architecture, SAM spans 538-601 (WDPEKVAEWI…SRHTRELLEI (64 aa)).

The chain is Sterile alpha motif domain-containing protein 15 (SAMD15) from Macaca fascicularis (Crab-eating macaque).